The sequence spans 418 residues: Protein-lysine 6-oxidase (418 aa).

A signal peptide spans 1-20 (MRFAWTALLGSLQLCALVRC). The propeptide at 21-169 (APPAASHRQP…NRVEVDGMVG (149 aa)) is removed by BMP1. The segment at 63-84 (YQPQRRRDPGATAPGAANATAP) is disordered. The segment covering 72–84 (GATAPGAANATAP) has biased composition (low complexity). Asparagine 80, asparagine 96, and asparagine 143 each carry an N-linked (GlcNAc...) asparagine glycan. The segment at 130–175 (TSGAHDAGTSRADNQTAPGEVPTLSNLRPPNRVEVDGMVGDDPYNP) is disordered. Over residues 140 to 157 (RADNQTAPGEVPTLSNLR) the composition is skewed to polar residues. Sulfotyrosine is present on tyrosine 188. The tract at residues 214 to 418 (PDLVPDPYYI…YASGCTISPY (205 aa)) is lysyl-oxidase like. Disulfide bonds link cysteine 239–cysteine 245, cysteine 292–cysteine 341, cysteine 325–cysteine 331, cysteine 352–cysteine 362, and cysteine 399–cysteine 413. 3 residues coordinate Cu cation: histidine 293, histidine 295, and histidine 297. Residues 321-356 (KASFCLEDTSCDYGYHRRFACTAHTQGLSPGCYDTY) constitute a cross-link (lysine tyrosylquinone (Lys-Tyr)). Tyrosine 356 is modified (2',4',5'-topaquinone).

This sequence belongs to the lysyl oxidase family. Interacts with MFAP4. Interacts (via propeptide) with EFEMP2; this interaction is strong and facilitates formation of ternary complexes with ELN during elastic fiber assembly; this interaction limits interaction of EFEMP2 with FBLN5. The cofactor is Cu cation. Requires lysine tyrosylquinone residue as cofactor. In terms of processing, the lysine tyrosylquinone cross-link (LTQ) is generated by condensation of the epsilon-amino group of a lysine with a topaquinone produced by oxidation of tyrosine. Post-translationally, proteolytically cleaved by BMP1 which removes the propeptide. Also proteolytically cleaved by ADAMTS2 and ADAMTS14, but not by ADAMTS3, at an additional cleavage site downstream of the BMP1 cleavage site. The propeptide plays a role in directing the deposition of this enzyme to elastic fibers, via interaction with tropoelastin. Cleavage by BMP1 to remove the propeptide does not increase enzymatic activity but increases binding to collagen. Cleavage by ADAMTS2 produces a form with reduced collagen-binding activity. Sulfated at Tyr-188 and also at either Tyr-184 or Tyr-185 which enhances binding to collagen.

The protein localises to the secreted. It localises to the extracellular space. It catalyses the reaction L-lysyl-[protein] + O2 + H2O = (S)-2-amino-6-oxohexanoyl-[protein] + H2O2 + NH4(+). Responsible for the post-translational oxidative deamination of peptidyl lysine residues in precursors to fibrous collagen and elastin. Regulator of Ras expression. May play a role in tumor suppression. Plays a role in the aortic wall architecture. This chain is Protein-lysine 6-oxidase, found in Bos taurus (Bovine).